A 379-amino-acid polypeptide reads, in one-letter code: DnaJ homolog subfamily B member 14 (379 aa).

Over 1 to 244 the chain is Cytoplasmic; it reads MEGNRDEAEK…GHEREEERGD (244 aa). The tract at residues 55 to 94 is disordered; sequence STAGNSPHCRKPSGSGDQSKPNCTKDSTSGSGEGGKGYTK. A compositionally biased stretch (polar residues) spans 69–84; that stretch reads SGDQSKPNCTKDSTSG. Residues 108-172 form the J domain; it reads NYYEVLGVTK…EKRKQYDLTG (65 aa). The interval 219 to 241 is disordered; the sequence is SNGRAGYSQQHQHRHSGHEREEE. A helical membrane pass occupies residues 245-265; it reads GGFSVFIQLMPIIVLILVSLL. The Lumenal portion of the chain corresponds to 266–379; that stretch reads SQLMVSNPPY…ERLTSLYKGG (114 aa).

This sequence belongs to the DnaJ family. DNAJB12/DNAJB14 subfamily. Interacts (via J domain) with HSPA8/Hsc70. Forms a multiprotein complex, at least composed of DNAJB12, DNAJB14, HSPA8/Hsc70 and SGTA; interaction with DNAJB14 and HSPA8/Hsc70 is direct.

It is found in the endoplasmic reticulum membrane. The protein resides in the nucleus membrane. Its function is as follows. Acts as a co-chaperone with HSPA8/Hsc70; required to promote protein folding and trafficking, prevent aggregation of client proteins, and promote unfolded proteins to endoplasmic reticulum-associated degradation (ERAD) pathway. Acts by determining HSPA8/Hsc70's ATPase and polypeptide-binding activities. Can also act independently of HSPA8/Hsc70: together with DNAJB12, acts as a chaperone that promotes maturation of potassium channels KCND2 and KCNH2 by stabilizing nascent channel subunits and assembling them into tetramers. While stabilization of nascent channel proteins is dependent on HSPA8/Hsc70, the process of oligomerization of channel subunits is independent of HSPA8/Hsc70. When overexpressed, forms membranous structures together with DNAJB12 and HSPA8/Hsc70 within the nucleus; the role of these structures, named DJANGOs, is still unclear. Functionally, (Microbial infection) In case of infection by polyomavirus, involved in the virus endoplasmic reticulum membrane penetration and infection. This chain is DnaJ homolog subfamily B member 14, found in Homo sapiens (Human).